The primary structure comprises 364 residues: Methylthioribose-1-phosphate isomerase (364 aa).

Substrate-binding positions include 46–48 (RGA), R89, and Q196. Catalysis depends on D237, which acts as the Proton donor. 247-248 (NK) contacts substrate.

It belongs to the eIF-2B alpha/beta/delta subunits family. MtnA subfamily.

It catalyses the reaction 5-(methylsulfanyl)-alpha-D-ribose 1-phosphate = 5-(methylsulfanyl)-D-ribulose 1-phosphate. The protein operates within amino-acid biosynthesis; L-methionine biosynthesis via salvage pathway; L-methionine from S-methyl-5-thio-alpha-D-ribose 1-phosphate: step 1/6. Functionally, catalyzes the interconversion of methylthioribose-1-phosphate (MTR-1-P) into methylthioribulose-1-phosphate (MTRu-1-P). The polypeptide is Methylthioribose-1-phosphate isomerase (Pelotomaculum thermopropionicum (strain DSM 13744 / JCM 10971 / SI)).